We begin with the raw amino-acid sequence, 495 residues long: WD repeat-containing protein 37 (495 aa).

Composition is skewed to polar residues over residues 1–13 (MPTE…TARQ) and 22–31 (SLSIRRTNSS). The interval 1-50 (MPTESASCSTARQTKQKRKSHSLSIRRTNSSEQERTGLPRDMLEGQDSKL) is disordered. Residues 32-47 (EQERTGLPRDMLEGQD) show a composition bias toward basic and acidic residues. WD repeat units lie at residues 154-194 (GHRD…CLVK) and 197-236 (GHVG…PTPQ). The disordered stretch occupies residues 237–266 (PVADTSQISGEDEVECSDKDEPDLDGDVSS). Positions 246–264 (GEDEVECSDKDEPDLDGDV) are enriched in acidic residues. 5 WD repeats span residues 280-319 (SHQG…LVHS), 322-361 (GHDQ…IHSV), 366-404 (GHTD…SPIA), 407-446 (RTDS…LARL), and 453-494 (GHRR…LLQE).

In terms of assembly, forms homodimers. Interacts with PACS1. Interacts with PACS2.

It localises to the cytoplasm. The protein localises to the nucleus. Required for normal ER Ca2+ handling in lymphocytes. Together with PACS1, it plays an essential role in stabilizing peripheral lymphocyte populations. This chain is WD repeat-containing protein 37 (WDR37), found in Pongo abelii (Sumatran orangutan).